The following is a 193-amino-acid chain: Putative 3-methyladenine DNA glycosylase (193 aa).

The protein belongs to the DNA glycosylase MPG family.

The polypeptide is Putative 3-methyladenine DNA glycosylase (Nitrosospira multiformis (strain ATCC 25196 / NCIMB 11849 / C 71)).